A 178-amino-acid polypeptide reads, in one-letter code: Large ribosomal subunit protein uL6 (178 aa).

This sequence belongs to the universal ribosomal protein uL6 family. As to quaternary structure, part of the 50S ribosomal subunit.

Its function is as follows. This protein binds to the 23S rRNA, and is important in its secondary structure. It is located near the subunit interface in the base of the L7/L12 stalk, and near the tRNA binding site of the peptidyltransferase center. This is Large ribosomal subunit protein uL6 from Streptococcus pneumoniae (strain JJA).